A 561-amino-acid chain; its full sequence is Dihydroxy-acid dehydratase (561 aa).

Cys-50 is a binding site for [2Fe-2S] cluster. Asp-82 is a Mg(2+) binding site. Cys-123 is a [2Fe-2S] cluster binding site. 2 residues coordinate Mg(2+): Asp-124 and Lys-125. The residue at position 125 (Lys-125) is an N6-carboxylysine. Residue Cys-195 coordinates [2Fe-2S] cluster. Mg(2+) is bound at residue Glu-447. Residue Ser-473 is the Proton acceptor of the active site.

The protein belongs to the IlvD/Edd family. In terms of assembly, homodimer. Requires [2Fe-2S] cluster as cofactor. It depends on Mg(2+) as a cofactor.

The catalysed reaction is (2R)-2,3-dihydroxy-3-methylbutanoate = 3-methyl-2-oxobutanoate + H2O. It catalyses the reaction (2R,3R)-2,3-dihydroxy-3-methylpentanoate = (S)-3-methyl-2-oxopentanoate + H2O. The protein operates within amino-acid biosynthesis; L-isoleucine biosynthesis; L-isoleucine from 2-oxobutanoate: step 3/4. It participates in amino-acid biosynthesis; L-valine biosynthesis; L-valine from pyruvate: step 3/4. Functions in the biosynthesis of branched-chain amino acids. Catalyzes the dehydration of (2R,3R)-2,3-dihydroxy-3-methylpentanoate (2,3-dihydroxy-3-methylvalerate) into 2-oxo-3-methylpentanoate (2-oxo-3-methylvalerate) and of (2R)-2,3-dihydroxy-3-methylbutanoate (2,3-dihydroxyisovalerate) into 2-oxo-3-methylbutanoate (2-oxoisovalerate), the penultimate precursor to L-isoleucine and L-valine, respectively. The chain is Dihydroxy-acid dehydratase from Acaryochloris marina (strain MBIC 11017).